Consider the following 332-residue polypeptide: Trans-2'-carboxybenzalpyruvate hydratase-aldolase (332 aa).

The active-site Schiff-base intermediate with substrate is Lys-178.

It belongs to the DapA family. In terms of assembly, homotrimer.

It carries out the reaction (3Z)-4-(2-carboxyphenyl)-2-oxobut-3-enoate + H2O = 2-formylbenzoate + pyruvate. With respect to regulation, not inhibited by sodium borohydride or sodium pyruvate. Unaffected by EDTA, EGTA, Mn(2+), Mg(2+) and Ca(2+). Plays a role in phenanthrene catabolism. Catalyzes the transformation of trans-2'-carboxbenzalpyruvate to 2-formylbenzoate and pyruvate. This chain is Trans-2'-carboxybenzalpyruvate hydratase-aldolase, found in Nocardioides sp. (strain KP7).